The sequence spans 401 residues: L-rhamnonate dehydratase (401 aa).

Histidine 29 and arginine 55 together coordinate substrate. Mg(2+) contacts are provided by aspartate 222, glutamate 248, and glutamate 276. Residue histidine 325 is the Proton acceptor of the active site. Glutamate 345 contributes to the substrate binding site.

The protein belongs to the mandelate racemase/muconate lactonizing enzyme family. RhamD subfamily. As to quaternary structure, homooctamer; tetramer of dimers. The cofactor is Mg(2+).

It catalyses the reaction L-rhamnonate = 2-dehydro-3-deoxy-L-rhamnonate + H2O. In terms of biological role, catalyzes the dehydration of L-rhamnonate to 2-keto-3-deoxy-L-rhamnonate (KDR). This chain is L-rhamnonate dehydratase, found in Escherichia coli O157:H7.